The chain runs to 238 residues: EKC/KEOPS complex subunit SPAP27G11.07c (238 aa).

The 219-residue stretch at 20–238 (EKKLTVVKQG…MRGRKRTMIG (219 aa)) folds into the Protein kinase domain. Residues 26 to 34 (VKQGAEAIT) and lysine 48 contribute to the ATP site. Catalysis depends on aspartate 148, which acts as the Proton acceptor.

It belongs to the protein kinase superfamily. BUD32 family. In terms of assembly, component of the EKC/KEOPS complex composed of at least SPAP27G11.07c/BUD32, cgi121, gon7, pgp2 and SPAC4H3.13/PCC1; the whole complex dimerizes.

The protein resides in the cytoplasm. It is found in the nucleus. Its subcellular location is the chromosome. The protein localises to the telomere. It carries out the reaction L-seryl-[protein] + ATP = O-phospho-L-seryl-[protein] + ADP + H(+). It catalyses the reaction L-threonyl-[protein] + ATP = O-phospho-L-threonyl-[protein] + ADP + H(+). Its function is as follows. Component of the EKC/KEOPS complex that is required for the formation of a threonylcarbamoyl group on adenosine at position 37 (t(6)A37) in tRNAs that read codons beginning with adenine. The complex is probably involved in the transfer of the threonylcarbamoyl moiety of threonylcarbamoyl-AMP (TC-AMP) to the N6 group of A37. BUD32 has ATPase activity in the context of the EKC/KEOPS complex and likely plays a supporting role to the catalytic subunit KAE1. The EKC/KEOPS complex also promotes both telomere uncapping and telomere elongation. The complex is required for efficient recruitment of transcriptional coactivators. The polypeptide is EKC/KEOPS complex subunit SPAP27G11.07c (Schizosaccharomyces pombe (strain 972 / ATCC 24843) (Fission yeast)).